Reading from the N-terminus, the 79-residue chain is Acyl carrier protein (79 aa).

The Carrier domain maps to 2-77 (ENIEQRVKKI…QAIDYVTAHL (76 aa)). Ser-37 bears the O-(pantetheine 4'-phosphoryl)serine mark.

The protein belongs to the acyl carrier protein (ACP) family. In terms of processing, 4'-phosphopantetheine is transferred from CoA to a specific serine of apo-ACP by AcpS. This modification is essential for activity because fatty acids are bound in thioester linkage to the sulfhydryl of the prosthetic group.

Its subcellular location is the cytoplasm. It functions in the pathway lipid metabolism; fatty acid biosynthesis. In terms of biological role, carrier of the growing fatty acid chain in fatty acid biosynthesis. In Aromatoleum aromaticum (strain DSM 19018 / LMG 30748 / EbN1) (Azoarcus sp. (strain EbN1)), this protein is Acyl carrier protein.